A 315-amino-acid chain; its full sequence is Initiation factor TFIIB homolog (315 aa).

This sequence belongs to the asfivirus C315R family.

Putative initation factor. The polypeptide is Initiation factor TFIIB homolog (Ornithodoros (relapsing fever ticks)).